The chain runs to 411 residues: F-box protein At4g19940 (411 aa).

Residues 29 to 75 (RQPIPEIPFDLVIEILTRLPAKSLMRFKSVSKLWSSLICSRNFTNRL) enclose the F-box domain.

This chain is F-box protein At4g19940, found in Arabidopsis thaliana (Mouse-ear cress).